A 67-amino-acid polypeptide reads, in one-letter code: MMSKLGALLTICLLLFPLTALPLDGDQPADRPAERMQDDISSEQHPLFDKERQCCTGSCLNCWPCCG.

Residues 1–20 form the signal peptide; the sequence is MMSKLGALLTICLLLFPLTA. Positions 21–52 are excised as a propeptide; sequence LPLDGDQPADRPAERMQDDISSEQHPLFDKER. Glutamine 53 is modified (pyrrolidone carboxylic acid). Cystine bridges form between cysteine 54–cysteine 66, cysteine 55–cysteine 62, and cysteine 59–cysteine 65. Proline 64 carries the post-translational modification 4-hydroxyproline. Cysteine 66 is modified (cysteine amide).

It belongs to the conotoxin M superfamily. In terms of tissue distribution, expressed by the venom duct.

It localises to the secreted. This chain is Conotoxin VnMMSK-02, found in Conus ventricosus (Mediterranean cone).